The chain runs to 426 residues: Ankyrin repeat-containing protein BDA1 (426 aa).

ANK repeat units follow at residues 1–29, 36–65, 70–99, 104–134, 138–167, and 182–212; these read MDSK…DILQ, IIHT…SFAK, YGLS…SLVR, GGMT…SIKD, NGET…KMRD, and GGNT…DRNI. Helical transmembrane passes span 288–308, 329–349, 355–375, and 380–400; these read ALLV…AQLL, WGCN…LLPV, WWYF…MYMM, and FFFL…VLYV.

The protein resides in the cell membrane. Functionally, involved in plant defense. Required for basal resistance against Pseudomonas syringae pv. tomato DC3000. Required for resistance against nonpathogenic bacteria. May be involved in signaling components that function downstream of SNC2 and upstream of NPR1 and WRKY70 to regulate defense responses. In Arabidopsis thaliana (Mouse-ear cress), this protein is Ankyrin repeat-containing protein BDA1.